Consider the following 318-residue polypeptide: UDP-3-O-acylglucosamine N-acyltransferase (318 aa).

His231 functions as the Proton acceptor in the catalytic mechanism.

This sequence belongs to the transferase hexapeptide repeat family. LpxD subfamily. Homotrimer.

It catalyses the reaction a UDP-3-O-[(3R)-3-hydroxyacyl]-alpha-D-glucosamine + a (3R)-hydroxyacyl-[ACP] = a UDP-2-N,3-O-bis[(3R)-3-hydroxyacyl]-alpha-D-glucosamine + holo-[ACP] + H(+). The protein operates within bacterial outer membrane biogenesis; LPS lipid A biosynthesis. Catalyzes the N-acylation of UDP-3-O-acylglucosamine using 3-hydroxyacyl-ACP as the acyl donor. Is involved in the biosynthesis of lipid A, a phosphorylated glycolipid that anchors the lipopolysaccharide to the outer membrane of the cell. This is UDP-3-O-acylglucosamine N-acyltransferase from Campylobacter jejuni subsp. doylei (strain ATCC BAA-1458 / RM4099 / 269.97).